The chain runs to 68 residues: Venom peptide 3 (68 aa).

A signal peptide spans 1–25 (MTKQSIVIVLFAAIAMMACLQRVTA). AXPX repeat units lie at residues 25–28 (AEPA), 33–36 (AAPI), 37–40 (AEPY), 41–44 (ANPE), and 47–50 (ASPE). A propeptide spanning residues 26–51 (EPAPEPIAAPIAEPYANPEAIASPEA) is cleaved from the precursor. Position 65 is a leucine amide (leucine 65).

Expressed by the venom gland.

The protein resides in the secreted. The protein localises to the target cell membrane. Functionally, antimicrobial peptide with strong activity against the fungi B.cinerea (MIC=5 uM) and C.albicans (MIC=33 uM), and no activity against the Gram-negative bacterium E.coli (MIC&gt;200 uM) and the Gram-positive bacterium S.aureus (MIC&gt;200 uM). Shows cytolytic activity against insect cell lines. Has no hemolytic activity against human erythrocytes. In vivo, peptide injection in the vicinity of the head and thorax of lepidopteran larvae induces feeding disorder that lasts one or two days before recovering. The sequence is that of Venom peptide 3 from Orancistrocerus drewseni (Solitary wasp).